The chain runs to 297 residues: Coiled-coil domain-containing protein 159 (297 aa).

Residues Glu-147–Ala-297 are a coiled coil. The disordered stretch occupies residues Leu-256–Ala-297.

As to quaternary structure, interacts with DYNLT2. Interacts with GGNBP1. Interacts with OSBP2.

Its function is as follows. Functions during spermatid development; may participate in the centrosome reduction procedure of spermatids and is required for the formation of the connecting piece/sperm head-tail coupling apparatus (HTCA) and the correct and tight attachment of the flagellum to the nuclear envelope. This is Coiled-coil domain-containing protein 159 (CCDC159) from Homo sapiens (Human).